Consider the following 118-residue polypeptide: Large ribosomal subunit protein bL19 (118 aa).

Belongs to the bacterial ribosomal protein bL19 family.

This protein is located at the 30S-50S ribosomal subunit interface and may play a role in the structure and function of the aminoacyl-tRNA binding site. This Parafrankia sp. (strain EAN1pec) protein is Large ribosomal subunit protein bL19.